We begin with the raw amino-acid sequence, 256 residues long: Triosephosphate isomerase (256 aa).

9-11 (NWK) serves as a coordination point for substrate. The active-site Electrophile is His94. Glu166 (proton acceptor) is an active-site residue. Substrate contacts are provided by residues Gly172, Ser211, and 232–233 (GG).

This sequence belongs to the triosephosphate isomerase family. Homodimer.

Its subcellular location is the cytoplasm. The catalysed reaction is D-glyceraldehyde 3-phosphate = dihydroxyacetone phosphate. It functions in the pathway carbohydrate biosynthesis; gluconeogenesis. It participates in carbohydrate degradation; glycolysis; D-glyceraldehyde 3-phosphate from glycerone phosphate: step 1/1. Functionally, involved in the gluconeogenesis. Catalyzes stereospecifically the conversion of dihydroxyacetone phosphate (DHAP) to D-glyceraldehyde-3-phosphate (G3P). The polypeptide is Triosephosphate isomerase (Natranaerobius thermophilus (strain ATCC BAA-1301 / DSM 18059 / JW/NM-WN-LF)).